A 210-amino-acid polypeptide reads, in one-letter code: Large ribosomal subunit protein uL3 (210 aa).

It belongs to the universal ribosomal protein uL3 family. In terms of assembly, part of the 50S ribosomal subunit. Forms a cluster with proteins L14 and L19.

One of the primary rRNA binding proteins, it binds directly near the 3'-end of the 23S rRNA, where it nucleates assembly of the 50S subunit. This chain is Large ribosomal subunit protein uL3, found in Lawsonia intracellularis (strain PHE/MN1-00).